The sequence spans 467 residues: Tel2-interacting protein 2 (467 aa).

Residues 4–45 (YKELARRLHTLQSKNEKEALEKQIDFLDKLVVEVDSLVHEQD) are a coiled coil.

The protein belongs to the TTI2 family. Component of the TTT complex composed of tel2, tti1 and tti2. Interacts with tel2 and ttiI1. Component of the ASTRA complex composed of at least rvb1, rvb2, tra1, tel2, tti1 and tti2.

The protein localises to the nucleus. Its function is as follows. Component of the tel2-tti1-tti2 (TTT) complex that stabilizes protein levels of the phosphatidylinositol 3-kinase-related protein kinase (PIKK) family proteins. The TTT complex is involved in the cellular resistance to DNA damage stresses, like ionizing radiation (IR), ultraviolet (UV) and mitomycin C (MMC). Component of the ASTRA complex involved in chromatin remodeling. The chain is Tel2-interacting protein 2 from Schizosaccharomyces pombe (strain 972 / ATCC 24843) (Fission yeast).